The following is a 353-amino-acid chain: Methionine import ATP-binding protein MetN (353 aa).

The 241-residue stretch at 11-251 (ITFDRVEKSF…PEHPTTRSFL (241 aa)) folds into the ABC transporter domain. 48–55 (GRSGAGKS) lines the ATP pocket.

It belongs to the ABC transporter superfamily. Methionine importer (TC 3.A.1.24) family. In terms of assembly, the complex is composed of two ATP-binding proteins (MetN), two transmembrane proteins (MetI) and a solute-binding protein (MetQ).

Its subcellular location is the cell inner membrane. The enzyme catalyses L-methionine(out) + ATP + H2O = L-methionine(in) + ADP + phosphate + H(+). The catalysed reaction is D-methionine(out) + ATP + H2O = D-methionine(in) + ADP + phosphate + H(+). In terms of biological role, part of the ABC transporter complex MetNIQ involved in methionine import. Responsible for energy coupling to the transport system. This Cereibacter sphaeroides (strain ATCC 17023 / DSM 158 / JCM 6121 / CCUG 31486 / LMG 2827 / NBRC 12203 / NCIMB 8253 / ATH 2.4.1.) (Rhodobacter sphaeroides) protein is Methionine import ATP-binding protein MetN.